Reading from the N-terminus, the 376-residue chain is Protein RecA (376 aa).

An ATP-binding site is contributed by 66-73 (GPESSGKT). Positions 329-376 (VGVKPEDLTAEPGADAAGAAADAEAPAKSVPAPAAKSAKGSKAAAAKS) are disordered. Positions 338–376 (AEPGADAAGAAADAEAPAKSVPAPAAKSAKGSKAAAAKS) are enriched in low complexity.

It belongs to the RecA family.

It is found in the cytoplasm. Can catalyze the hydrolysis of ATP in the presence of single-stranded DNA, the ATP-dependent uptake of single-stranded DNA by duplex DNA, and the ATP-dependent hybridization of homologous single-stranded DNAs. It interacts with LexA causing its activation and leading to its autocatalytic cleavage. The sequence is that of Protein RecA from Streptomyces rimosus.